Here is a 281-residue protein sequence, read N- to C-terminus: Large ribosomal subunit protein uL2 (281 aa).

Residues 27 to 38 (DSPEKSLTEPLK) show a composition bias toward basic and acidic residues. Disordered regions lie at residues 27–59 (DSPE…GGHK) and 225–281 (AMNP…ARSQ). Over residues 45–59 (VHGHITRRHQGGGHK) the composition is skewed to basic residues.

It belongs to the universal ribosomal protein uL2 family. In terms of assembly, part of the 50S ribosomal subunit. Forms a bridge to the 30S subunit in the 70S ribosome.

Its function is as follows. One of the primary rRNA binding proteins. Required for association of the 30S and 50S subunits to form the 70S ribosome, for tRNA binding and peptide bond formation. It has been suggested to have peptidyltransferase activity; this is somewhat controversial. Makes several contacts with the 16S rRNA in the 70S ribosome. The chain is Large ribosomal subunit protein uL2 from Myxococcus xanthus (strain DK1622).